An 850-amino-acid polypeptide reads, in one-letter code: Elongation factor 2 (850 aa).

A tr-type G domain is found at 17 to 351 (KNIRNISVIA…QIALKLPSPL (335 aa)). GTP-binding positions include 26-33 (AHVDHGKS), 159-162 (NKLD), and 213-215 (SGL). Histidine 707 carries the post-translational modification Diphthamide.

The protein belongs to the TRAFAC class translation factor GTPase superfamily. Classic translation factor GTPase family. EF-G/EF-2 subfamily.

It is found in the cytoplasm. It carries out the reaction GTP + H2O = GDP + phosphate + H(+). The protein operates within protein biosynthesis; polypeptide chain elongation. Catalyzes the GTP-dependent ribosomal translocation step during translation elongation. During this step, the ribosome changes from the pre-translocational (PRE) to the post-translocational (POST) state as the newly formed A-site-bound peptidyl-tRNA and P-site-bound deacylated tRNA move to the P and E sites, respectively. Catalyzes the coordinated movement of the two tRNA molecules, the mRNA and conformational changes in the ribosome. The protein is Elongation factor 2 (EFT1) of Encephalitozoon cuniculi (strain GB-M1) (Microsporidian parasite).